A 485-amino-acid chain; its full sequence is Malonate-semialdehyde dehydrogenase (485 aa).

NAD(+) contacts are provided by phenylalanine 155, lysine 179, glutamate 182, arginine 183, and serine 232. The Nucleophile role is filled by cysteine 287. Glutamate 386 provides a ligand contact to NAD(+).

Belongs to the aldehyde dehydrogenase family. IolA subfamily. As to quaternary structure, homotetramer.

It carries out the reaction 3-oxopropanoate + NAD(+) + CoA + H2O = hydrogencarbonate + acetyl-CoA + NADH + H(+). It catalyses the reaction 2-methyl-3-oxopropanoate + NAD(+) + CoA + H2O = propanoyl-CoA + hydrogencarbonate + NADH + H(+). Its pathway is polyol metabolism; myo-inositol degradation into acetyl-CoA; acetyl-CoA from myo-inositol: step 7/7. Catalyzes the oxidation of malonate semialdehyde (MSA) and methylmalonate semialdehyde (MMSA) into acetyl-CoA and propanoyl-CoA, respectively. Is involved in a myo-inositol catabolic pathway. Bicarbonate, and not CO2, is the end-product of the enzymatic reaction. This Halalkalibacterium halodurans (strain ATCC BAA-125 / DSM 18197 / FERM 7344 / JCM 9153 / C-125) (Bacillus halodurans) protein is Malonate-semialdehyde dehydrogenase.